The chain runs to 220 residues: Protein-L-isoaspartate O-methyltransferase (220 aa).

The active site involves Ser65.

Belongs to the methyltransferase superfamily. L-isoaspartyl/D-aspartyl protein methyltransferase family.

It localises to the cytoplasm. The enzyme catalyses [protein]-L-isoaspartate + S-adenosyl-L-methionine = [protein]-L-isoaspartate alpha-methyl ester + S-adenosyl-L-homocysteine. In terms of biological role, catalyzes the methyl esterification of L-isoaspartyl residues in peptides and proteins that result from spontaneous decomposition of normal L-aspartyl and L-asparaginyl residues. It plays a role in the repair and/or degradation of damaged proteins. The sequence is that of Protein-L-isoaspartate O-methyltransferase from Pelodictyon phaeoclathratiforme (strain DSM 5477 / BU-1).